The following is a 443-amino-acid chain: MESLASLYKNHIATLQERTRDALARFKLDALLIHSGELFNVFLDDHPYPFKVNPQFKAWVPVTQVPNCWLLVDGVNKPKLWFYLPVDYWHNVEPLPNSFWTEDVEVIALPKADGIGSLLPAARGNIGYIGPVPERALQLGIEASNINPKGVIDYLHYYRSFKTEYELACMREAQKMAVNGHRAAEEAFRSGMSEFDINIAYLTATGHRDTDVPYSNIVALNEHAAVLHYTKLDHQAPEEMRSFLLDAGAEYNGYAADLTRTWSAKSDNDYAQLVKDVNDEQLALIATMKAGVSYVDYHIQFHQRIAKLLRKHQIITDMSEEAMVENDLTGPFMPHGIGHPLGLQVHDVAGFMQDDSGTHLAAPAKYPYLRCTRILQPGMVLTIEPGIYFIESLLAPWREGQFSKHFNWQKIEALKPFGGIRIEDNVVIHENNVENMTRDLKLA.

5 residues coordinate Mn(2+): D246, D257, H339, E384, and E423.

It belongs to the peptidase M24B family. Bacterial-type prolidase subfamily. It depends on Mn(2+) as a cofactor.

The catalysed reaction is Xaa-L-Pro dipeptide + H2O = an L-alpha-amino acid + L-proline. In terms of biological role, splits dipeptides with a prolyl residue in the C-terminal position. This Escherichia coli (strain SMS-3-5 / SECEC) protein is Xaa-Pro dipeptidase.